The following is a 186-amino-acid chain: Putative manganese efflux pump MntP (186 aa).

6 helical membrane-spanning segments follow: residues Val-5–Phe-25, Val-41–Ile-61, Ala-72–Ala-92, Phe-107–Leu-127, Ile-135–Leu-155, and Tyr-166–Ile-186.

The protein belongs to the MntP (TC 9.B.29) family.

It is found in the cell membrane. In terms of biological role, probably functions as a manganese efflux pump. The sequence is that of Putative manganese efflux pump MntP from Bacillus licheniformis (strain ATCC 14580 / DSM 13 / JCM 2505 / CCUG 7422 / NBRC 12200 / NCIMB 9375 / NCTC 10341 / NRRL NRS-1264 / Gibson 46).